The sequence spans 352 residues: Selenide, water dikinase (352 aa).

Cysteine 23 is an active-site residue. Residues lysine 26 and 54 to 56 contribute to the ATP site; that span reads SRD. Aspartate 57 is a binding site for Mg(2+). ATP-binding positions include aspartate 74, aspartate 97, and 145–147; that span reads GHS. Aspartate 97 serves as a coordination point for Mg(2+). Residue aspartate 233 coordinates Mg(2+).

The protein belongs to the selenophosphate synthase 1 family. Class I subfamily. Homodimer. Mg(2+) serves as cofactor.

It carries out the reaction hydrogenselenide + ATP + H2O = selenophosphate + AMP + phosphate + 2 H(+). Synthesizes selenophosphate from selenide and ATP. This Shewanella sp. (strain MR-4) protein is Selenide, water dikinase.